The sequence spans 244 residues: Coenzyme Q-binding protein COQ10 homolog B, mitochondrial (244 aa).

This sequence belongs to the COQ10 family. As to quaternary structure, interacts with coenzyme Q.

It localises to the mitochondrion inner membrane. Its function is as follows. Required for the function of coenzyme Q in the respiratory chain. May serve as a chaperone or may be involved in the transport of Q6 from its site of synthesis to the catalytic sites of the respiratory complexes. The sequence is that of Coenzyme Q-binding protein COQ10 homolog B, mitochondrial (coq10b) from Xenopus laevis (African clawed frog).